Reading from the N-terminus, the 230-residue chain is NAD(P)H-quinone oxidoreductase subunit K, chloroplastic (230 aa).

[4Fe-4S] cluster is bound by residues Cys-43, Cys-44, Cys-108, and Cys-139.

The protein belongs to the complex I 20 kDa subunit family. NDH is composed of at least 16 different subunits, 5 of which are encoded in the nucleus. [4Fe-4S] cluster is required as a cofactor.

It is found in the plastid. The protein resides in the chloroplast thylakoid membrane. The enzyme catalyses a plastoquinone + NADH + (n+1) H(+)(in) = a plastoquinol + NAD(+) + n H(+)(out). It catalyses the reaction a plastoquinone + NADPH + (n+1) H(+)(in) = a plastoquinol + NADP(+) + n H(+)(out). Its function is as follows. NDH shuttles electrons from NAD(P)H:plastoquinone, via FMN and iron-sulfur (Fe-S) centers, to quinones in the photosynthetic chain and possibly in a chloroplast respiratory chain. The immediate electron acceptor for the enzyme in this species is believed to be plastoquinone. Couples the redox reaction to proton translocation, and thus conserves the redox energy in a proton gradient. The chain is NAD(P)H-quinone oxidoreductase subunit K, chloroplastic from Lotus japonicus (Lotus corniculatus var. japonicus).